Here is a 355-residue protein sequence, read N- to C-terminus: MIKTLKRIPLVFLIAIMACSNSGDNGKDKVEEQEQAQEQGEKKGQGEERDKEDGIDGLQPTFLADQDPKPDDKKWIKVEGVSDEFNDSELDLTKWSPTPEFIWNGQDRGWYGGSRSLFEADNVSVGNGFLRIEGEKFDSPKYSPKDNTDTPPQRRYGGAYVYGKTLAEPGYYIEARMRASKTAMSAAFWLKTETKPCGENLNDGENLEIDIQECVGVFTGELGDEWTKDDWAVNANWDRIFHYNTHRHNSPCNNIGDRQTKGGKANFDKKNSDEFHIYAAYWHADGSKIDFYIDGELEKSITPVIPFKGALRLIMSSNFYDWIEETSAEDMGFNRPLEDRYTQFDWVRVWQLEDL.

The first 18 residues, 1 to 18 (MIKTLKRIPLVFLIAIMA), serve as a signal peptide directing secretion. Cys-19 carries N-palmitoyl cysteine lipidation. Cys-19 is lipidated: S-diacylglycerol cysteine. The segment at 22–72 (SGDNGKDKVEEQEQAQEQGEKKGQGEERDKEDGIDGLQPTFLADQDPKPDD) is disordered. Residues 39–54 (QGEKKGQGEERDKEDG) show a composition bias toward basic and acidic residues. The GH16 domain occupies 71-355 (DDKKWIKVEG…WVRVWQLEDL (285 aa)). Residues Trp-110, Glu-208, and Glu-213 each contribute to the substrate site. Glu-208 acts as the Nucleophile in catalysis. Catalysis depends on Glu-213, which acts as the Proton donor.

Belongs to the glycosyl hydrolase 16 family.

It is found in the cell outer membrane. The catalysed reaction is Hydrolysis of beta-D-galactopyranose-(1-&gt;4)-alpha-L-galactopyranose-6-sulfate linkages in porphyran.. Its function is as follows. Cleaves the sulfated polysaccharide porphyran at the (1-&gt;4) linkages between beta-D-galactopyranose and alpha-L-galactopyranose-6-sulfate, forming mostly the disaccharide alpha-L-galactopyranose-6-sulfate-(1-&gt;3)-beta-D-galactose. This is Beta-porphyranase C (porC) from Zobellia galactanivorans (strain DSM 12802 / CCUG 47099 / CIP 106680 / NCIMB 13871 / Dsij).